The following is a 157-amino-acid chain: Dihydrofolate reductase type 6 (157 aa).

The 155-residue stretch at 2-156 folds into the DHFR domain; that stretch reads KISLMAAVSE…IDYTYQIWAK (155 aa).

Belongs to the dihydrofolate reductase family. Homodimer.

The catalysed reaction is (6S)-5,6,7,8-tetrahydrofolate + NADP(+) = 7,8-dihydrofolate + NADPH + H(+). It participates in cofactor biosynthesis; tetrahydrofolate biosynthesis; 5,6,7,8-tetrahydrofolate from 7,8-dihydrofolate: step 1/1. Its function is as follows. Key enzyme in folate metabolism. Catalyzes an essential reaction for de novo glycine and purine synthesis, and for DNA precursor synthesis. The sequence is that of Dihydrofolate reductase type 6 (dhfrVI) from Proteus mirabilis.